Reading from the N-terminus, the 313-residue chain is Protein EMSY-LIKE 2 (313 aa).

Positions 1-88 (MEAQIHILEQ…HQSLDVHPSP (88 aa)) constitute an ENT domain. The stretch at 35-58 (MTNLRKELRISDDENRQLLNNVHN) forms a coiled coil. Disordered regions lie at residues 84–106 (VHPS…YPSI) and 195–229 (LNVG…REHL). The span at 206-219 (GNRRTLSHGGRGRG) shows a compositional bias: basic residues. Residues 267 to 293 (HELDKAKKLLKEHEQALIAAIARLTDA) adopt a coiled-coil conformation. Serine 294 is subject to Phosphoserine. Residues 294–313 (SDYESDGEEPYSHELPMLLG) form a disordered region.

In terms of assembly, interacts with EDM2 in nucleus.

The protein resides in the nucleus. Probably involved in the regulation of chromatin states. Contributes to RPP7-mediated and basal immunity, especially against Hyaloperonospora arabidopsidis isolate Hiks1. Regulates negatively EDM2-dependent floral transition. The protein is Protein EMSY-LIKE 2 of Arabidopsis thaliana (Mouse-ear cress).